The following is a 65-amino-acid chain: Large ribosomal subunit protein bL35 (65 aa).

The segment at M1–A25 is disordered.

Belongs to the bacterial ribosomal protein bL35 family.

This chain is Large ribosomal subunit protein bL35, found in Clostridium botulinum (strain Alaska E43 / Type E3).